The chain runs to 182 residues: tRNA-splicing endonuclease (182 aa).

Catalysis depends on residues Y119, H127, and K158.

Belongs to the tRNA-intron endonuclease family. Archaeal short subfamily. As to quaternary structure, homotetramer; although the tetramer contains four active sites, only two participate in the cleavage. Therefore, it should be considered as a dimer of dimers.

The enzyme catalyses pretRNA = a 3'-half-tRNA molecule with a 5'-OH end + a 5'-half-tRNA molecule with a 2',3'-cyclic phosphate end + an intron with a 2',3'-cyclic phosphate and a 5'-hydroxyl terminus.. Endonuclease that removes tRNA introns. Cleaves pre-tRNA at the 5'- and 3'-splice sites to release the intron. The products are an intron and two tRNA half-molecules bearing 2',3' cyclic phosphate and 5'-OH termini. Recognizes a pseudosymmetric substrate in which 2 bulged loops of 3 bases are separated by a stem of 4 bp. In Saccharolobus islandicus (strain L.S.2.15 / Lassen #1) (Sulfolobus islandicus), this protein is tRNA-splicing endonuclease.